Here is a 433-residue protein sequence, read N- to C-terminus: MVSTSSFKTTKSEEIFTAAQKLMPGGVSSPVRAFKSVGGQPIVFDHVEGAYIWDVDNNQYIDYVGTWGPAICGHAHPDVISALHKALDKGTSFGAPCMQENILAEMVIDAVPSIEMVRFVNSGTEACMSVLRLMRAYTNREKIIKFEGCYHGHADMFLVKAGSGVATLGLPDSPGVPKTTTSNTLTAPYNDLEAVKALFENNKDEIAGLILEPVVGNAGFIPPDAGFLEGLRELTKEYGALLVFDEVMTGFRIAYGGAQEKFGVTPDLTTLGKVIGGGLPVGAYGGRKEIMSLVAPSGPMYQAGTLSGNPLAMTAGIKTLELLQKPGTYDYLDRITKKLINGLLTLAKEAGHEVYGGSISGMFGLFFTGEAVHNYEDAKKSDTAKFGRFHRGMLERGIYLAPSQFEAGFTSLAHSDEDVEKTLQAAKEVFATL.

K273 carries the post-translational modification N6-(pyridoxal phosphate)lysine.

This sequence belongs to the class-III pyridoxal-phosphate-dependent aminotransferase family. HemL subfamily. As to quaternary structure, homodimer. Pyridoxal 5'-phosphate serves as cofactor.

The protein localises to the cytoplasm. The catalysed reaction is (S)-4-amino-5-oxopentanoate = 5-aminolevulinate. It participates in porphyrin-containing compound metabolism; protoporphyrin-IX biosynthesis; 5-aminolevulinate from L-glutamyl-tRNA(Glu): step 2/2. Its pathway is porphyrin-containing compound metabolism; chlorophyll biosynthesis. The sequence is that of Glutamate-1-semialdehyde 2,1-aminomutase from Gloeothece citriformis (strain PCC 7424) (Cyanothece sp. (strain PCC 7424)).